The following is a 277-amino-acid chain: MSSPMPQSSLNNSQVANMIDESNETPSTTPPMISNTNTPVPEIEMEEPNAPQDNTVAPNSIDGEKVQEENEDDDEQEEEEEEEEEEEESLSLPLSKIKKIFKMDPDYLAASQSAVYATGLATELFIQYFTEQSLVLAKMDKRKKLQYKDFSNAVASQDSLNFLSDTVPKTQPIGELINSKKVNVNSHDNNEIREIDNTEIDEIEVDEPVNATRKVKPLAKGQQTLNFSATNTATESINPMPIKKSVISDIVTTDNETEVTSKEATEEVEDQDVIMIN.

Polar residues-rich tracts occupy residues 1-16 (MSSPMPQSSLNNSQVA) and 24-39 (ETPSTTPPMISNTNTP). The tract at residues 1–91 (MSSPMPQSSL…EEEEEEESLS (91 aa)) is disordered. The segment covering 69 to 89 (ENEDDDEQEEEEEEEEEEEES) has biased composition (acidic residues).

In terms of assembly, heterotetramer. Consists of four subunits: POL2, DPB2, DPB3 and DPB4.

Its subcellular location is the nucleus. Its function is as follows. As accessory component of the DNA polymerase epsilon (DNA polymerase II) participates in chromosomal DNA replication. This chain is DNA polymerase epsilon subunit C (DPB3), found in Debaryomyces hansenii (strain ATCC 36239 / CBS 767 / BCRC 21394 / JCM 1990 / NBRC 0083 / IGC 2968) (Yeast).